A 265-amino-acid chain; its full sequence is Undecaprenyl-diphosphatase (265 aa).

A run of 8 helical transmembrane segments spans residues phenylalanine 19 to glycine 39, alanine 42 to tryptophan 62, isoleucine 80 to alanine 100, leucine 108 to valine 128, methionine 143 to phenylalanine 163, serine 181 to tyrosine 201, isoleucine 220 to valine 240, and isoleucine 243 to tryptophan 263.

This sequence belongs to the UppP family.

It localises to the cell inner membrane. The enzyme catalyses di-trans,octa-cis-undecaprenyl diphosphate + H2O = di-trans,octa-cis-undecaprenyl phosphate + phosphate + H(+). Functionally, catalyzes the dephosphorylation of undecaprenyl diphosphate (UPP). Confers resistance to bacitracin. The sequence is that of Undecaprenyl-diphosphatase from Solidesulfovibrio magneticus (strain ATCC 700980 / DSM 13731 / RS-1) (Desulfovibrio magneticus).